The primary structure comprises 744 residues: Phosphoribosylformylglycinamidine synthase subunit PurL (744 aa).

His-49 is an active-site residue. Tyr-52 and Lys-91 together coordinate ATP. Position 93 (Glu-93) interacts with Mg(2+). Residues 94–97 (SHNH) and Arg-116 each bind substrate. The Proton acceptor role is filled by His-95. Asp-117 contacts Mg(2+). Gln-240 contacts substrate. A Mg(2+)-binding site is contributed by Asp-268. Residue 312–314 (ESQ) coordinates substrate. The ATP site is built by Asp-493 and Gly-530. Asn-531 contributes to the Mg(2+) binding site. Ser-533 lines the substrate pocket.

It belongs to the FGAMS family. In terms of assembly, monomer. Part of the FGAM synthase complex composed of 1 PurL, 1 PurQ and 2 PurS subunits.

Its subcellular location is the cytoplasm. It carries out the reaction N(2)-formyl-N(1)-(5-phospho-beta-D-ribosyl)glycinamide + L-glutamine + ATP + H2O = 2-formamido-N(1)-(5-O-phospho-beta-D-ribosyl)acetamidine + L-glutamate + ADP + phosphate + H(+). Its pathway is purine metabolism; IMP biosynthesis via de novo pathway; 5-amino-1-(5-phospho-D-ribosyl)imidazole from N(2)-formyl-N(1)-(5-phospho-D-ribosyl)glycinamide: step 1/2. Its function is as follows. Part of the phosphoribosylformylglycinamidine synthase complex involved in the purines biosynthetic pathway. Catalyzes the ATP-dependent conversion of formylglycinamide ribonucleotide (FGAR) and glutamine to yield formylglycinamidine ribonucleotide (FGAM) and glutamate. The FGAM synthase complex is composed of three subunits. PurQ produces an ammonia molecule by converting glutamine to glutamate. PurL transfers the ammonia molecule to FGAR to form FGAM in an ATP-dependent manner. PurS interacts with PurQ and PurL and is thought to assist in the transfer of the ammonia molecule from PurQ to PurL. In Nitrobacter hamburgensis (strain DSM 10229 / NCIMB 13809 / X14), this protein is Phosphoribosylformylglycinamidine synthase subunit PurL.